Here is a 121-residue protein sequence, read N- to C-terminus: Fluoride-specific ion channel FluC (121 aa).

Transmembrane regions (helical) follow at residues 5-25 (LLIFLGGGTGSVLRYLLTISI), 33-53 (FPWGTFAVNILGCILIGVFYT), 66-83 (LMLTIGLCGGFTTFSTFS), and 98-118 (FFTYIIGSVVLGILGVMLGIW). Residues glycine 74 and threonine 77 each coordinate Na(+).

This sequence belongs to the fluoride channel Fluc/FEX (TC 1.A.43) family.

It is found in the cell inner membrane. It carries out the reaction fluoride(in) = fluoride(out). Its activity is regulated as follows. Na(+) is not transported, but it plays an essential structural role and its presence is essential for fluoride channel function. Its function is as follows. Fluoride-specific ion channel. Important for reducing fluoride concentration in the cell, thus reducing its toxicity. The polypeptide is Fluoride-specific ion channel FluC (Phocaeicola vulgatus (strain ATCC 8482 / DSM 1447 / JCM 5826 / CCUG 4940 / NBRC 14291 / NCTC 11154) (Bacteroides vulgatus)).